Here is a 269-residue protein sequence, read N- to C-terminus: Regulatory protein RecX (269 aa).

Belongs to the RecX family.

The protein resides in the cytoplasm. Modulates RecA activity. This chain is Regulatory protein RecX, found in Listeria monocytogenes serotype 4a (strain HCC23).